We begin with the raw amino-acid sequence, 60 residues long: Conotoxin Cl1.1 (60 aa).

Positions 1-19 (MRCLPVIVILLLLISSAAA) are cleaved as a signal peptide. Residues 20–48 (VVEGPLRVNRRLRPRKAPVDMQARDWNWG) constitute a propeptide that is removed on maturation.

This sequence belongs to the conotoxin T superfamily. Contains 2 disulfide bonds. In terms of tissue distribution, expressed by the venom duct.

It is found in the secreted. In Californiconus californicus (California cone), this protein is Conotoxin Cl1.1.